Here is a 181-residue protein sequence, read N- to C-terminus: Isopentenyl-diphosphate Delta-isomerase (181 aa).

Mn(2+) is bound by residues His25 and His32. The Nudix hydrolase domain occupies 30 to 164 (PLHLAFSCWL…PWAFSPWMVM (135 aa)). Residue Cys67 is part of the active site. Cys67 contributes to the Mg(2+) binding site. His69 contributes to the Mn(2+) binding site. Glu87 contacts Mg(2+). 2 residues coordinate Mn(2+): Glu114 and Glu116. Residue Glu116 is part of the active site.

Belongs to the IPP isomerase type 1 family. As to quaternary structure, homodimer. The cofactor is Mg(2+). Mn(2+) serves as cofactor.

Its subcellular location is the cytoplasm. It carries out the reaction isopentenyl diphosphate = dimethylallyl diphosphate. It functions in the pathway isoprenoid biosynthesis; dimethylallyl diphosphate biosynthesis; dimethylallyl diphosphate from isopentenyl diphosphate: step 1/1. In terms of biological role, catalyzes the 1,3-allylic rearrangement of the homoallylic substrate isopentenyl (IPP) to its highly electrophilic allylic isomer, dimethylallyl diphosphate (DMAPP). The protein is Isopentenyl-diphosphate Delta-isomerase of Salmonella typhi.